The primary structure comprises 291 residues: Ribosomal RNA small subunit methyltransferase H (291 aa).

S-adenosyl-L-methionine is bound by residues 31 to 33 (GGY), Asp-49, Phe-76, Asp-97, and Gln-104.

Belongs to the methyltransferase superfamily. RsmH family.

It is found in the cytoplasm. It carries out the reaction cytidine(1402) in 16S rRNA + S-adenosyl-L-methionine = N(4)-methylcytidine(1402) in 16S rRNA + S-adenosyl-L-homocysteine + H(+). Functionally, specifically methylates the N4 position of cytidine in position 1402 (C1402) of 16S rRNA. This chain is Ribosomal RNA small subunit methyltransferase H, found in Anaplasma marginale (strain St. Maries).